The chain runs to 192 residues: Potassium-transporting ATPase KdpC subunit (192 aa).

A helical transmembrane segment spans residues 14–34 (LTGVLVVLCGLIYPAMVTGIA).

This sequence belongs to the KdpC family. As to quaternary structure, the system is composed of three essential subunits: KdpA, KdpB and KdpC.

Its subcellular location is the cell membrane. In terms of biological role, part of the high-affinity ATP-driven potassium transport (or Kdp) system, which catalyzes the hydrolysis of ATP coupled with the electrogenic transport of potassium into the cytoplasm. This subunit acts as a catalytic chaperone that increases the ATP-binding affinity of the ATP-hydrolyzing subunit KdpB by the formation of a transient KdpB/KdpC/ATP ternary complex. This is Potassium-transporting ATPase KdpC subunit from Bacillus cytotoxicus (strain DSM 22905 / CIP 110041 / 391-98 / NVH 391-98).